The sequence spans 401 residues: Heparan-sulfate 6-O-sulfotransferase 1 (401 aa).

Residues 1-4 (MVER) lie on the Cytoplasmic side of the membrane. A helical; Signal-anchor for type II membrane protein membrane pass occupies residues 5–27 (ASKFVLVVAGSACFMLILYQYAG). Topologically, residues 28-401 (PGLSLGAPGG…DYMSHIIEKW (374 aa)) are lumenal. 83 to 91 (HIQKTGGTT) contributes to the 3'-phosphoadenylyl sulfate binding site. Substrate-binding positions include 113-114 (KK), Arg-130, Trp-135, and His-140. The active-site Proton acceptor is His-140. 2 residues coordinate 3'-phosphoadenylyl sulfate: Arg-175 and Ser-183. Substrate-binding residues include His-187 and Trp-194. An N-linked (GlcNAc...) asparagine glycan is attached at Asn-254. Residue 307-309 (MQY) participates in 3'-phosphoadenylyl sulfate binding. Asn-310 is a glycosylation site (N-linked (GlcNAc...) asparagine). 313–314 (RA) lines the 3'-phosphoadenylyl sulfate pocket. Residues 367–389 (ERLLHRSKEALPREDTEEPGRVP) form a disordered region.

This sequence belongs to the sulfotransferase 6 family. N-glycosylated.

The protein resides in the membrane. The catalysed reaction is alpha-D-glucosaminyl-[heparan sulfate](n) + 3'-phosphoadenylyl sulfate = 6-sulfo-alpha-D-glucosaminyl-[heparan sulfate](n) + adenosine 3',5'-bisphosphate + H(+). With respect to regulation, inhibited by dithiothreitol and stimulated by protamine. In terms of biological role, 6-O-sulfation enzyme which catalyzes the transfer of sulfate from 3'-phosphoadenosine 5'-phosphosulfate (PAPS) to position 6 of the N-sulfoglucosamine residue (GlcNS) of heparan sulfate. Also transfers sulfate to CDSNS-heparin and performs the crucial step modification in the biosynthesis of anticoagulant heparan sulfate (HSact). Critical for normal neuronal development where it may play a role in neuron branching. May also play a role in limb development. May prefer iduronic acid. The protein is Heparan-sulfate 6-O-sulfotransferase 1 of Cricetulus griseus (Chinese hamster).